Reading from the N-terminus, the 181-residue chain is RNA-binding protein (181 aa).

Positions 106 to 181 (FLTSVNPGES…DANTRKSKRK (76 aa)) are disordered. Residues 141 to 157 (RNSKKGAKKSSSARKKK) are compositionally biased toward basic residues. A compositionally biased stretch (low complexity) spans 160–172 (SSNSETDLSSDSD).

Belongs to the phytoreovirus RNA-binding protein family.

It is found in the host cytoplasm. Constituent of viral factories. Binds to ssRNA and dsRNA. This chain is RNA-binding protein, found in Rice dwarf virus (isolate Akita) (RDV).